A 267-amino-acid chain; its full sequence is Phosphoinositide-3-kinase-interacting protein 1 (267 aa).

Positions 1-21 are cleaved as a signal peptide; sequence MLLAWVHTFLLSNMLLAEAYG. At 22-172 the chain is on the extracellular side; sequence SGGCFWDNGH…NSKEKKDLGT (151 aa). The 78-residue stretch at 24–101 folds into the Kringle domain; it reads GCFWDNGHLY…EKRPCEDLRC (78 aa). Disulfide bonds link Cys25-Cys101, Cys46-Cys82, and Cys70-Cys96. The span at 91–101 shows a compositional bias: basic and acidic residues; it reads PEKRPCEDLRC. A disordered region spans residues 91-122; sequence PEKRPCEDLRCPETTSQAPPPPPPSSTTELEE. The helical transmembrane segment at 173–193 threads the bilayer; sequence LGYVLGVTMTVIIIAIGVGIV. Residues 194–267 lie on the Cytoplasmic side of the membrane; that stretch reads LGYTYKRGKD…LTDQAGTPGA (74 aa).

The protein localises to the cell membrane. In terms of biological role, negative regulator of hepatic phosphatidylinositol 3-kinase (PI3K) activity. The sequence is that of Phosphoinositide-3-kinase-interacting protein 1 (Pik3ip1) from Rattus norvegicus (Rat).